Reading from the N-terminus, the 200-residue chain is Holliday junction resolvase RecU (200 aa).

A disordered region spans residues 1-25 (MTIRYPNGKRYNQASQPHKTPIKKH). Positions 85, 87, 100, and 119 each coordinate Mg(2+).

This sequence belongs to the RecU family. It depends on Mg(2+) as a cofactor.

The protein resides in the cytoplasm. It catalyses the reaction Endonucleolytic cleavage at a junction such as a reciprocal single-stranded crossover between two homologous DNA duplexes (Holliday junction).. Functionally, endonuclease that resolves Holliday junction intermediates in genetic recombination. Cleaves mobile four-strand junctions by introducing symmetrical nicks in paired strands. Promotes annealing of linear ssDNA with homologous dsDNA. Required for DNA repair, homologous recombination and chromosome segregation. The sequence is that of Holliday junction resolvase RecU from Bacillus cereus (strain ZK / E33L).